The chain runs to 227 residues: AN1-type zinc finger protein 3 (227 aa).

The segment at 12-44 adopts an A20-type zinc-finger fold; the sequence is PSLPPRCPCGFWGSSKTMNLCSKCFADFQKKQP. 4 residues coordinate Zn(2+): C18, C20, C32, and C35. Disordered regions lie at residues 41–99 and 113–151; these read KKQP…TEEC and PTKR…RSKQ. Low complexity-rich tracts occupy residues 49–59 and 66–77; these read TPSTSNSQSDL and SDNNNTSVTTPT. 2 stretches are compositionally biased toward polar residues: residues 78-96 and 113-127; these read LSPS…SPST and PTKR…SENE. Positions 135–148 are enriched in basic and acidic residues; sequence RLVENPERPEESGR. The segment at 151–200 adopts an AN1-type zinc-finger fold; it reads QKSRRRCFQCQTKLELVQQELGSCRCGYVFCMLHRLPEQHDCTFDHMGRG. 8 residues coordinate Zn(2+): C157, C160, C174, C176, C181, H184, H190, and C192.

In terms of tissue distribution, expressed in testis.

The protein is AN1-type zinc finger protein 3 (Zfand3) of Mus musculus (Mouse).